Consider the following 248-residue polypeptide: DNA/RNA-binding protein ALBA1 (248 aa).

The interval glycine 217–serine 248 is disordered. Residues tyrosine 222–serine 248 show a composition bias toward gly residues.

This sequence belongs to the histone-like Alba family. May form homodimers. Identified in a TARE6-associated complex consisting of over 30 proteins and including ALBA1, ALBA2 and ALBA4; the complex binds to the non-coding subtelomeric repeat region TARE6.

The protein localises to the nucleus. Its subcellular location is the chromosome. It localises to the telomere. It is found in the cytoplasm. Its function is as follows. Possesses DNA- and RNA-binding activities. During the asexual blood stages binds to a sub-population of mature mRNAs and regulates the timing of their translation. Binds to DNA with relaxed sequence specificity. Associates with the subtelomeric TARE6 repeats. The chain is DNA/RNA-binding protein ALBA1 from Plasmodium falciparum (isolate 3D7).